The sequence spans 202 residues: Small ribosomal subunit protein uS4 (202 aa).

Over residues 1–13 (MSRYRGPRLRVTR) the composition is skewed to basic residues. Residues 1 to 42 (MSRYRGPRLRVTRRLGELPGLTRKASKKSNPPGQHGQARRKR) are disordered. The region spanning 90 to 152 (NRLDNVCFRL…KASKKLVEGN (63 aa)) is the S4 RNA-binding domain.

This sequence belongs to the universal ribosomal protein uS4 family. Part of the 30S ribosomal subunit. Contacts protein S5. The interaction surface between S4 and S5 is involved in control of translational fidelity.

In terms of biological role, one of the primary rRNA binding proteins, it binds directly to 16S rRNA where it nucleates assembly of the body of the 30S subunit. With S5 and S12 plays an important role in translational accuracy. In Prochlorococcus marinus subsp. pastoris (strain CCMP1986 / NIES-2087 / MED4), this protein is Small ribosomal subunit protein uS4.